The primary structure comprises 26 residues: TRSGGACNSHNQCCDDFCSTATSTCV.

2 disulfide bridges follow: Cys7–Cys18 and Cys13–Cys25.

Belongs to the conotoxin O1 superfamily. Expressed by the venom duct.

Its subcellular location is the secreted. The sequence is that of Conotoxin Eb6.15 (E1) from Conus ebraeus (Hebrew cone).